The primary structure comprises 516 residues: Glucose-1-phosphate adenylyltransferase large subunit 1, chloroplastic/amyloplastic (516 aa).

The transit peptide at 1 to 45 directs the protein to the chloroplast; sequence MQFALALDTNSGPHQIRSCEGDGIDRLEKLSIGGRKQEKALRNRC.

Belongs to the bacterial/plant glucose-1-phosphate adenylyltransferase family. Heterotetramer. Endosperm.

It localises to the plastid. The protein localises to the chloroplast. The protein resides in the amyloplast. It carries out the reaction alpha-D-glucose 1-phosphate + ATP + H(+) = ADP-alpha-D-glucose + diphosphate. The protein operates within glycan biosynthesis; starch biosynthesis. Its activity is regulated as follows. Activated by 3'phosphoglycerate, inhibited by orthophosphate. Allosteric regulation. In terms of biological role, this protein plays a role in synthesis of starch. It catalyzes the synthesis of the activated glycosyl donor, ADP-glucose from Glc-1-P and ATP. The protein is Glucose-1-phosphate adenylyltransferase large subunit 1, chloroplastic/amyloplastic (SH2) of Zea mays (Maize).